Reading from the N-terminus, the 527-residue chain is Gustatory receptor for bitter taste 66a (527 aa).

At 1–46 (MAQAEDAVQPLLQQFQQLFFISKIAGILPQDLEKFRSRNLLEKSRN) the chain is on the cytoplasmic side. The helical transmembrane segment at 47–67 (GMIYMLSTLILYVVLYNILIY) threads the bilayer. At 68–80 (SFGEEDRSLKASQ) the chain is on the extracellular side. A helical transmembrane segment spans residues 81–101 (STLTFVIGLFLTYIGLIMMVS). At 102–144 (DQLTALRNQGRIGELYERIRLVDERLYKEGCVMDNSTIGRRIR) the chain is on the cytoplasmic side. A helical transmembrane segment spans residues 145 to 165 (IMLIMTVIFELSILVSTYVKL). The Extracellular segment spans residues 166-174 (VDYSQWMSL). A helical membrane pass occupies residues 175 to 195 (LWIVSAIPTFINTLDKIWFAV). At 196 to 345 (SLYALKERFE…KALNELWSYP (150 aa)) the chain is on the cytoplasmic side. A helical membrane pass occupies residues 346–366 (ILSLMAYGFLIFTAQLYFLYC). The Extracellular portion of the chain corresponds to 367-382 (ATQYQSIPSLFRSAKN). Residues 383–403 (PFITVIVLSYTSGKCVYLIYL) traverse the membrane as a helical segment. Topologically, residues 404 to 460 (SWKTSQASKRTGISLHKCGVVADDNLLYEIVNHLSLKLLNHSVDFSACGFFTLDMET) are cytoplasmic. Residues 461–481 (LYGVSGGITSYLIILIQFNLA) form a helical membrane-spanning segment. The Extracellular portion of the chain corresponds to 482 to 527 (AQQAKEAIQTFNSLNDTAGLVGAATDMDNISSTLRDFVTTTMTPAV). Residues N496 and N510 are each glycosylated (N-linked (GlcNAc...) asparagine).

Belongs to the insect chemoreceptor superfamily. Gustatory receptor (GR) family. Gr66a subfamily. In terms of tissue distribution, taste hairs in labial palps, labral and cibarial sense organs and forelegs. In larvae, is expressed in neurons of the terminal external chemosensory organ, as well as in the dorsal, ventral, and posterior pharyngeal sense organs.

It is found in the cell membrane. Functionally, gustatory receptor required for response to the bitter in taste neurons. Gr66a cells respond to bitter compounds such as caffeine, theophylline, threonine or valine. Flies avoid bitter substances, suggesting that Gr66a neuron activity is sufficient to mediate avoidance behavior. Required for sensing and avoiding N,N-Diethyl-meta-toluamide (DEET), the most widely used insect repellent worldwide, as well as to L-canavanine, a plant-derived insecticide. Gr66a neurons are also involved in the sex-specific perception of molecules inducing male avoidance behavior, probably through sensing 7-tricosene (7-T), a male cuticular pheromone and leading to inhibition of male-male courtship. Finally, also plays a role in oviposition behavior, in which females evaluate their environment and choose to lay eggs on substrates they may find aversive in other contexts. This is Gustatory receptor for bitter taste 66a (Gr66a) from Drosophila melanogaster (Fruit fly).